The sequence spans 436 residues: Enolase (436 aa).

Gln167 contacts (2R)-2-phosphoglycerate. Glu209 acts as the Proton donor in catalysis. 3 residues coordinate Mg(2+): Asp246, Glu291, and Asp318. Positions 343, 372, 373, and 394 each coordinate (2R)-2-phosphoglycerate. Lys343 functions as the Proton acceptor in the catalytic mechanism.

This sequence belongs to the enolase family. As to quaternary structure, component of the RNA degradosome, a multiprotein complex involved in RNA processing and mRNA degradation. Mg(2+) serves as cofactor.

It is found in the cytoplasm. Its subcellular location is the secreted. The protein localises to the cell surface. It carries out the reaction (2R)-2-phosphoglycerate = phosphoenolpyruvate + H2O. It functions in the pathway carbohydrate degradation; glycolysis; pyruvate from D-glyceraldehyde 3-phosphate: step 4/5. Functionally, catalyzes the reversible conversion of 2-phosphoglycerate (2-PG) into phosphoenolpyruvate (PEP). It is essential for the degradation of carbohydrates via glycolysis. The protein is Enolase of Actinobacillus pleuropneumoniae serotype 3 (strain JL03).